The following is a 442-amino-acid chain: UDP-N-acetylglucosamine 1-carboxyvinyltransferase (442 aa).

A phosphoenolpyruvate-binding site is contributed by 22 to 23 (KN). Position 94 (arginine 94) interacts with UDP-N-acetyl-alpha-D-glucosamine. Aspartate 119 serves as the catalytic Proton donor. Aspartate 309 and valine 331 together coordinate UDP-N-acetyl-alpha-D-glucosamine.

Belongs to the EPSP synthase family. MurA subfamily.

Its subcellular location is the cytoplasm. The enzyme catalyses phosphoenolpyruvate + UDP-N-acetyl-alpha-D-glucosamine = UDP-N-acetyl-3-O-(1-carboxyvinyl)-alpha-D-glucosamine + phosphate. Its pathway is cell wall biogenesis; peptidoglycan biosynthesis. In terms of biological role, cell wall formation. Adds enolpyruvyl to UDP-N-acetylglucosamine. The chain is UDP-N-acetylglucosamine 1-carboxyvinyltransferase from Chlamydia muridarum (strain MoPn / Nigg).